Reading from the N-terminus, the 874-residue chain is Probable inorganic carbon transporter subunit DabA (874 aa).

Zn(2+) contacts are provided by Cys398, Asp400, His580, and Cys595.

Belongs to the inorganic carbon transporter (TC 9.A.2) DabA family. As to quaternary structure, forms a complex with DabB. Zn(2+) is required as a cofactor.

The protein resides in the cell membrane. Its function is as follows. Part of an energy-coupled inorganic carbon pump. The sequence is that of Probable inorganic carbon transporter subunit DabA from Bacillus cereus (strain ATCC 10987 / NRS 248).